The chain runs to 925 residues: Leucine--tRNA ligase (925 aa).

A 'HIGH' region motif is present at residues 40–51; sequence PYPSGAGLHVGH. Positions 700–704 match the 'KMSKS' region motif; that stretch reads KMSKS. Lys-703 contributes to the ATP binding site.

This sequence belongs to the class-I aminoacyl-tRNA synthetase family.

The protein localises to the cytoplasm. It carries out the reaction tRNA(Leu) + L-leucine + ATP = L-leucyl-tRNA(Leu) + AMP + diphosphate. This Porphyromonas gingivalis (strain ATCC 33277 / DSM 20709 / CIP 103683 / JCM 12257 / NCTC 11834 / 2561) protein is Leucine--tRNA ligase.